Reading from the N-terminus, the 288-residue chain is Energy-coupling factor transporter ATP-binding protein EcfA3 (288 aa).

The 243-residue stretch at 3–245 (INFRNVSFSY…ESYLRKEKLR (243 aa)) folds into the ABC transporter domain. ATP is bound at residue 40–47 (GHTGSGKS).

The protein belongs to the ABC transporter superfamily. Energy-coupling factor EcfA family. As to quaternary structure, forms a stable energy-coupling factor (ECF) transporter complex composed of 2 membrane-embedded substrate-binding proteins (S component), 2 ATP-binding proteins (A component) and 2 transmembrane proteins (T component).

The protein localises to the cell membrane. Its function is as follows. ATP-binding (A) component of a common energy-coupling factor (ECF) ABC-transporter complex. Unlike classic ABC transporters this ECF transporter provides the energy necessary to transport a number of different substrates. The polypeptide is Energy-coupling factor transporter ATP-binding protein EcfA3 (Oenococcus oeni (strain ATCC BAA-331 / PSU-1)).